The primary structure comprises 792 residues: Carboxysome assembly protein CsoS2 (792 aa).

A compositionally biased stretch (basic and acidic residues) spans 1–15; it reads MAKQSSRELALERRK. The interval 1–235 is N-terminal domain; sequence MAKQSSRELA…EISQRVRELR (235 aa). 3 disordered regions span residues 1–259, 280–299, and 338–359; these read MAKQ…RNGS, QVVTGTQANRSSKTTGNEAS, and HGNRVTGNEVGRSEKVTGDEPG. The stretch at 7–22 is one N-repeat 1 repeat; it reads RELALERRKALSNSGK. 2 stretches are compositionally biased toward polar residues: residues 17 to 36 and 69 to 82; these read LSNSGKKSTTLNGSSPNRIR and DTSFVASRESSGAS. The N-repeat 2 repeat unit spans residues 94 to 109; that stretch reads RELVLARRDELSRRGQ. Basic and acidic residues-rich tracts occupy residues 97 to 106 and 113 to 126; these read VLARRDELSR and KSKDRTRAEVEKIS. Polar residues predominate over residues 161 to 175; that stretch reads DTVSRLSSRNSTSRP. N-repeat repeat units follow at residues 187 to 202 and 225 to 240; these read RALVLARREAQSKHGK and REISQRVRELRSKSGA. The segment covering 218 to 236 has biased composition (basic and acidic residues); sequence GDPDLSSREISQRVRELRS. The segment at 240-615 is middle region; the sequence is ATGKKRSGAC…VQACGSDAPA (376 aa). M-repeat repeat units follow at residues 270 to 319, 330 to 379, 388 to 427, 441 to 490, 500 to 549, and 560 to 609; these read KVGL…DTFC, KVAV…NQYC, KVGQSVTEDGRKVSGVMVGRSEKVTGDEAGSNRQLTGDQY, KVGS…NTFC, KVGL…SGWC, and RTPK…VQAC. Disordered regions lie at residues 608–662 and 687–792; these read ACGS…GSQI and HFKS…GARG. The C-terminal domain stretch occupies residues 616–792; the sequence is GSNDHQGSSE…LITVSGGARG (177 aa). Polar residues-rich tracts occupy residues 618-636 and 651-662; these read NDHQGSSESSPWTHFSVQS and VTGTSYEQGSQI. 2 C-repeat repeats span residues 633–678 and 703–738; these read SVQS…GTEQ and TRPESRVTGEGQSAGLNITGDDWDRSERVTGTEGAS. Positions 763-792 are C-terminal peptide (CTP); sequence EVSQPMSRVTGSSGNTDQGSLITVSGGARG. Residues 764 to 785 are compositionally biased toward polar residues; that stretch reads VSQPMSRVTGSSGNTDQGSLIT.

Belongs to the CsoS2 family. Probably interacts with the carboxysome major shell protein CsoS1 via the N-terminal domain; this complex probably also interacts with RuBisCO. Post-translationally, has been suggested to undergo ribosomal frameshifting, as does its ortholog in H.neapolitanus. The exact position of the putative frameshift is not given, but it would probably occur in the sixth M-repeat and remove the C-terminus.

The protein localises to the carboxysome. In terms of biological role, required for alpha-carboxysome (Cb) assembly, mediates interaction between RuBisCO and the Cb shell. The protein is probably intrinsically disordered. The C-terminal repeats act as the encapsulation signal to target proteins to the Cb; they are necessary and sufficient to target both CsoS2 and foreign proteins to the Cb. The N-terminal repeats of this protein bind simultaneously to both subunits of RuBisCO. Probably also interacts with the major shell proteins (CsoS1); that interaction would increase the local concentration of CsoS2 so that it can condense RuBisCO and full carboxysomes can be formed. This Prochlorococcus marinus (strain MIT 9313) protein is Carboxysome assembly protein CsoS2.